The chain runs to 72 residues: UPF0270 protein YheU (72 aa).

The protein belongs to the UPF0270 family.

The chain is UPF0270 protein YheU from Escherichia fergusonii (strain ATCC 35469 / DSM 13698 / CCUG 18766 / IAM 14443 / JCM 21226 / LMG 7866 / NBRC 102419 / NCTC 12128 / CDC 0568-73).